Consider the following 559-residue polypeptide: MSESFAELFEESLKSLDMQPGAIITGIVVDIDGDWVTVHAGLKSEGVIPVEQFYNEQGELTIKVGDEVHVALDAVEDGFGETKLSREKAKRAESWIVLEAAFAADEVVKGVINGKVKGGFTVDVNGIRAFLPGSLVDVRPVRDTTHLEGKELEFKVIKLDQKRNNVVVSRRSVLEAENSAEREALLESLQEGQQVKGIVKNLTDYGAFVDLGGVDGLLHITDMAWKRIKHPSEIVNVGDEIDVKVLKFDRERNRVSLGLKQLGEDPWVAIKARYPEGTRVMARVTNLTDYGCFAELEEGVEGLVHVSEMDWTNKNIHPSKVVQVGDEVEVQVLDIDEERRRISLGIKQCKSNPWEDFSSQFNKGDRISGTIKSITDFGIFIGLDGGIDGLVHLSDISWNEVGEEAVRRFKKGDELETVILSVDPERERISLGIKQLEDDPFSNYASLHEKGSIVRGTVKEVDAKGAVISLGDDIEGILKASEISRDRVEDARNVLKEGEEVEAKIISIDRKSRVISLSVKSKDVDDEKDAMKELRKQEVESAGPTTIGDLIRAQMENQG.

6 S1 motif domains span residues 21 to 87 (GAII…LSRE), 105 to 171 (DEVV…VSRR), 192 to 260 (GQQV…LGLK), 277 to 347 (GTRV…LGIK), 364 to 434 (GDRI…LGIK), and 451 to 520 (GSIV…LSVK).

Belongs to the bacterial ribosomal protein bS1 family.

In terms of biological role, binds mRNA; thus facilitating recognition of the initiation point. It is needed to translate mRNA with a short Shine-Dalgarno (SD) purine-rich sequence. The chain is Small ribosomal subunit protein bS1 (rpsA) from Pseudomonas aeruginosa (strain ATCC 15692 / DSM 22644 / CIP 104116 / JCM 14847 / LMG 12228 / 1C / PRS 101 / PAO1).